Here is a 147-residue protein sequence, read N- to C-terminus: Myoglobin (147 aa).

A Globin domain is found at 2 to 141 (ADFDAVLKCW…IIADLEANYK (140 aa)). Nitrite is bound at residue histidine 60. O2 is bound at residue histidine 60. Histidine 89 is a heme b binding site.

This sequence belongs to the globin family. Monomeric.

Its subcellular location is the cytoplasm. It localises to the sarcoplasm. It carries out the reaction Fe(III)-heme b-[protein] + nitric oxide + H2O = Fe(II)-heme b-[protein] + nitrite + 2 H(+). The enzyme catalyses H2O2 + AH2 = A + 2 H2O. Its function is as follows. Monomeric heme protein which primary function is to store oxygen and facilitate its diffusion within muscle tissues. Reversibly binds oxygen through a pentacoordinated heme iron and enables its timely and efficient release as needed during periods of heightened demand. Depending on the oxidative conditions of tissues and cells, and in addition to its ability to bind oxygen, it also has a nitrite reductase activity whereby it regulates the production of bioactive nitric oxide. Under stress conditions, like hypoxia and anoxia, it also protects cells against reactive oxygen species thanks to its pseudoperoxidase activity. The polypeptide is Myoglobin (mb) (Thunnus alalunga (Albacore)).